The chain runs to 205 residues: FAS-associated death domain protein (205 aa).

Residues P3–D81 form the DED domain. Residues L97–Q181 form the Death domain. The disordered stretch occupies residues Q181–P205. The residue at position 191 (S191) is a Phosphoserine.

In terms of assembly, can self-associate. Component of the AIM2 PANoptosome complex, a multiprotein complex that drives inflammatory cell death (PANoptosis). Component of the death-induced signaling complex (DISC) composed of cell surface receptor FAS/CD95 or TNFRSF1A, adapter protein FADD and the CASP8 protease; recruitment of CASP8 to the complex is required for processing of CASP8 into the p18 and p10 subunits. Interacts (via death domain) with FAS (via death domain). Interacts directly (via DED domain) with NOL3 (via CARD domain); inhibits death-inducing signaling complex (DISC) assembly by inhibiting the increase in FAS-FADD binding induced by FAS activation. Interacts with CFLAR, PEA15 and MBD4. When phosphorylated, part of a complex containing HIPK3 and FAS. May interact with MAVS/IPS1. Interacts with MOCV v-CFLAR protein and PIDD1. Interacts with RIPK1 and TRADD. Interacts with stimulated TNFRSF10B. Interacts with DDX24.

The protein localises to the cytoplasm. Functionally, apoptotic adapter molecule that recruits caspases CASP8 or CASP10 to the activated FAS/CD95 or TNFRSF1A/TNFR-1 receptors. The resulting aggregate called the death-inducing signaling complex (DISC) performs CASP8 proteolytic activation. Active CASP8 initiates the subsequent cascade of caspases mediating apoptosis. Involved in interferon-mediated antiviral immune response, playing a role in the positive regulation of interferon signaling. This Mus musculus (Mouse) protein is FAS-associated death domain protein.